The following is a 591-amino-acid chain: Calnexin (591 aa).

The N-terminal stretch at 1-20 (MEGKWLLCLLLVLGTAAVEA) is a signal peptide. Residues 21 to 482 (HDGHDDDAID…QMLEAAEERP (462 aa)) are Lumenal-facing. Residues serine 75 and aspartate 118 each coordinate Ca(2+). At lysine 138 the chain carries N6-acetyllysine. Cysteine 161 and cysteine 195 are disulfide-bonded. An alpha-D-glucoside is bound by residues tyrosine 165, lysine 167, tyrosine 186, and aspartate 193. The disordered stretch occupies residues 261-347 (GNLLNDMTPP…EKPEDWDEDM (87 aa)). A compositionally biased stretch (basic and acidic residues) spans 275–320 (REIEDPEDRKPEDWDERPKIADPDAVKPDDWDEDAPSKIPDEEATK). The tract at residues 277-410 (IEDPEDRKPE…RKIPNPDFFE (134 aa)) is p domain (Extended arm). A run of 5 repeats spans residues 279 to 291 (DPED…WDER), 296 to 308 (DPDA…WDED), 315 to 327 (DEEA…WLDD), 334 to 346 (DPDA…WDED), and 349 to 359 (GEWEAPQIANP). 2 4 X approximate repeats regions span residues 279 to 346 (DPED…WDED) and 349 to 406 (GEWE…IPNP). Over residues 324-347 (WLDDEPEYIPDPDAEKPEDWDEDM) the composition is skewed to acidic residues. An interaction with PPIB region spans residues 327-360 (DEPEYIPDPDAEKPEDWDEDMDGEWEAPQIANPK). Cysteine 361 and cysteine 367 are disulfide-bonded. A run of 3 repeats spans residues 368 to 378 (GVWQRPMIDNP), 382 to 392 (GKWKPPMIDNP), and 396 to 406 (GIWKPRKIPNP). Residue glutamate 426 coordinates an alpha-D-glucoside. Aspartate 437 provides a ligand contact to Ca(2+). Residues 483–503 (WLWVVYILTVALPVFLVILFC) traverse the membrane as a helical segment. 2 S-palmitoyl cysteine lipidation sites follow: cysteine 503 and cysteine 504. The Cytoplasmic segment spans residues 504–591 (CSGKKQSNAM…SPRNRKPRRE (88 aa)). The sufficient to mediate interaction with SGIP1 stretch occupies residues 504–591 (CSGKKQSNAM…SPRNRKPRRE (88 aa)). Over residues 514–539 (EYKKTDAPQPDVKDEEGKEEEKNKRD) the composition is skewed to basic and acidic residues. The segment at 514–591 (EYKKTDAPQP…SPRNRKPRRE (78 aa)) is disordered. At serine 553 the chain carries Phosphoserine. Positions 555–568 (AEEDGVTGSQDEED) are enriched in acidic residues. Threonine 561 is subject to Phosphothreonine. The residue at position 563 (serine 563) is a Phosphoserine; by MAPK3. Phosphoserine is present on serine 582.

The protein belongs to the calreticulin family. Interacts with MAPK3/ERK1. Interacts with KCNH2. Associates with ribosomes. The palmitoylated form interacts with the ribosome-translocon complex component SSR1, promoting efficient folding of glycoproteins. Interacts with SERPINA2P/SERPINA2 and with the S and Z variants of SERPINA1. Interacts with SGIP1; involved in negative regulation of endocytosis. Interacts with PPIB. Interacts with SMIM22. Interacts with TMX2. Interacts with TMEM35A/NACHO. Interacts with CHRNA7. Interacts with reticulophagy regulators RETREG2 and RETREG3. Interacts with DNM1L; may form part of a larger protein complex at the ER-mitochondrial interface during mitochondrial fission. Interacts with ADAM7. In terms of processing, phosphorylated at Ser-563 by MAPK3/ERK1. Phosphorylation by MAPK3/ERK1 increases its association with ribosomes. Palmitoylation by DHHC6 leads to the preferential localization to the perinuclear rough ER. It mediates the association of calnexin with the ribosome-translocon complex (RTC) which is required for efficient folding of glycosylated proteins. Post-translationally, ubiquitinated, leading to proteasomal degradation. Probably ubiquitinated by ZNRF4. In terms of tissue distribution, expressed in sperm (at protein level).

The protein resides in the endoplasmic reticulum membrane. It localises to the mitochondrion membrane. The protein localises to the melanosome membrane. Functionally, calcium-binding protein that interacts with newly synthesized monoglucosylated glycoproteins in the endoplasmic reticulum. It may act in assisting protein assembly and/or in the retention within the ER of unassembled protein subunits. It seems to play a major role in the quality control apparatus of the ER by the retention of incorrectly folded proteins. Associated with partial T-cell antigen receptor complexes that escape the ER of immature thymocytes, it may function as a signaling complex regulating thymocyte maturation. Additionally it may play a role in receptor-mediated endocytosis at the synapse. The chain is Calnexin (Canx) from Mus musculus (Mouse).